Consider the following 426-residue polypeptide: Histidine--tRNA ligase (426 aa).

Belongs to the class-II aminoacyl-tRNA synthetase family. Homodimer.

It localises to the cytoplasm. The catalysed reaction is tRNA(His) + L-histidine + ATP = L-histidyl-tRNA(His) + AMP + diphosphate + H(+). In Streptococcus equi subsp. equi (strain 4047), this protein is Histidine--tRNA ligase.